The following is a 348-amino-acid chain: EGF-like domain containing protein 1 (348 aa).

Residues 1–19 form the signal peptide; that stretch reads MFYLSTFMTIVISLSLVSC. The region spanning 60–92 is the EGF-like domain; the sequence is TGSDCKVTCQNNGRCYDGNKCLCSSDYTGHLCE. Disulfide bonds link Cys64/Cys74, Cys68/Cys80, and Cys82/Cys91. One can recognise a ZP domain in the interval 99 to 342; it reads RCTLDGVVFE…PTCAAPAVSQ (244 aa).

In terms of tissue distribution, prismatic layer of shell (at protein level). Expressed primarily in the mantle with highest level in the mantle edge and lower level in the mantle pallium.

Its subcellular location is the secreted. This Margaritifera margaritifera (Freshwater pearl mussel) protein is EGF-like domain containing protein 1.